The chain runs to 438 residues: Acid phosphatase type 7 (438 aa).

The signal sequence occupies residues 1-26 (MHPLPGYWSCYCLLLLFSLGVQGSLG). Residues aspartate 141, aspartate 170, and tyrosine 173 each contribute to the Fe cation site. Aspartate 170 contacts Zn(2+). Asparagine 205 serves as a coordination point for Zn(2+). A glycan (N-linked (GlcNAc...) asparagine) is linked at asparagine 211. The Zn(2+) site is built by histidine 286 and histidine 333. A Fe cation-binding site is contributed by histidine 335. Asparagine 350 and asparagine 404 each carry an N-linked (GlcNAc...) asparagine glycan.

It belongs to the metallophosphoesterase superfamily. Purple acid phosphatase family. Fe cation serves as cofactor. It depends on Zn(2+) as a cofactor.

It localises to the secreted. The catalysed reaction is a phosphate monoester + H2O = an alcohol + phosphate. The chain is Acid phosphatase type 7 from Homo sapiens (Human).